Consider the following 252-residue polypeptide: Accessory gland protein Acp32CD (252 aa).

Residues 1-19 form the signal peptide; the sequence is MWRMRMRLLTGYLVLLALG. The segment at 42-252 is disordered; sequence PDGEGGTGVD…GAKEDDYEEM (211 aa). Gly residues predominate over residues 44-69; sequence GEGGTGVDGGGGGAGGGAAGPGGGTG. Composition is skewed to basic and acidic residues over residues 104–122, 142–153, 159–171, and 209–225; these read AIGKKESGGGSDGKSDSKD, SDSKDAKDRQDK, QEGKRTDHSHHSS, and NGARESSQENQDAKEVA.

Seminal fluid.

The protein resides in the secreted. Responsible for physiological and behavioral changes in mated female flies. This chain is Accessory gland protein Acp32CD (Acp32CD), found in Drosophila melanogaster (Fruit fly).